A 284-amino-acid polypeptide reads, in one-letter code: 2-dehydro-3-deoxyphosphooctonate aldolase (284 aa).

This sequence belongs to the KdsA family.

Its subcellular location is the cytoplasm. It carries out the reaction D-arabinose 5-phosphate + phosphoenolpyruvate + H2O = 3-deoxy-alpha-D-manno-2-octulosonate-8-phosphate + phosphate. It functions in the pathway carbohydrate biosynthesis; 3-deoxy-D-manno-octulosonate biosynthesis; 3-deoxy-D-manno-octulosonate from D-ribulose 5-phosphate: step 2/3. It participates in bacterial outer membrane biogenesis; lipopolysaccharide biosynthesis. The protein is 2-dehydro-3-deoxyphosphooctonate aldolase of Paraburkholderia phymatum (strain DSM 17167 / CIP 108236 / LMG 21445 / STM815) (Burkholderia phymatum).